Consider the following 311-residue polypeptide: Olfactory receptor 10D1B (311 aa).

At 1–24 (MKNLSVVTQFILLGIPHTEGVETM) the chain is on the extracellular side. A helical transmembrane segment spans residues 25-45 (LFVLFFSFYIFTLVGNLLILL). Residues 46-54 (AIVSSSRLH) are Cytoplasmic-facing. A helical membrane pass occupies residues 55 to 75 (TPMYFFLCQLSVCDIFFPSVS). Over 76-95 (SPKMLFYLSGNTPAISYAGC) the chain is Extracellular. Cys-95 and Cys-187 are disulfide-bonded. A helical transmembrane segment spans residues 96 to 116 (VSQLFFYHFLGGTECFLYTVM). Residues 117–137 (AYDRFVAICYPLRYSVIMSHR) lie on the Cytoplasmic side of the membrane. A helical transmembrane segment spans residues 138–158 (ICAFLAMGTAVFGCIHSTFLT). Topologically, residues 159–192 (TLTFQLPYCGPKDVNYYFCDIPVVMKLACADTST) are extracellular. The helical transmembrane segment at 193 to 213 (LEMVGFISVGLMPLSCFFFIL) threads the bilayer. The Cytoplasmic segment spans residues 214–237 (TSYSCIVRSILQIRSTEGRHRAFS). A helical membrane pass occupies residues 238–258 (TCSAHFTAILLFYMPVIFIYL). The Extracellular segment spans residues 259 to 271 (RPTPSPWLDATVQ). Residues 272 to 288 (ILNNLVTPMLNPLIYSL) traverse the membrane as a helical segment. The Cytoplasmic segment spans residues 289–311 (RNKEVKSSLWTVLHLLCFLPKHL).

The protein belongs to the G-protein coupled receptor 1 family.

The protein localises to the cell membrane. Odorant receptor. The protein is Olfactory receptor 10D1B of Mus musculus (Mouse).